The chain runs to 149 residues: Large ribosomal subunit protein uL15 (149 aa).

The tract at residues 14 to 63 (ASRKRVGRGSGSGLGCTSGKGNKGQNARAGGGVRPGFEGGQMPLQRRLPK) is disordered. Composition is skewed to gly residues over residues 21 to 35 (RGSG…GKGN) and 42 to 52 (AGGGVRPGFEG).

It belongs to the universal ribosomal protein uL15 family. Part of the 50S ribosomal subunit.

Its function is as follows. Binds to the 23S rRNA. The chain is Large ribosomal subunit protein uL15 from Nitratidesulfovibrio vulgaris (strain DSM 19637 / Miyazaki F) (Desulfovibrio vulgaris).